The following is a 127-amino-acid chain: MADTHPLVTVETIVLVGLGGFAGSNLRYFVGLFFPGLQGTLLVNVCGSFALGVLVYEGLQVGALASETKLAASTGFISSFTTYSTFAVETVLTPEWAVANVVGSYALGFAGVLVGREVVRLFAGGGQ.

A run of 3 helical transmembrane segments spans residues 6–26, 29–49, and 95–115; these read PLVT…GSNL, FVGL…CGSF, and EWAV…VLVG.

The protein belongs to the fluoride channel Fluc/FEX (TC 1.A.43) family.

The protein resides in the cell membrane. The enzyme catalyses fluoride(in) = fluoride(out). Its function is as follows. Fluoride-specific ion channel. Important for reducing fluoride concentration in the cell, thus reducing its toxicity. The chain is Fluoride-specific ion channel FluC 1 from Haloarcula marismortui (strain ATCC 43049 / DSM 3752 / JCM 8966 / VKM B-1809) (Halobacterium marismortui).